The following is a 288-amino-acid chain: Elongation factor Ts (288 aa).

Residues 82 to 85 (TDFV) are involved in Mg(2+) ion dislocation from EF-Tu.

This sequence belongs to the EF-Ts family.

It is found in the cytoplasm. Its function is as follows. Associates with the EF-Tu.GDP complex and induces the exchange of GDP to GTP. It remains bound to the aminoacyl-tRNA.EF-Tu.GTP complex up to the GTP hydrolysis stage on the ribosome. The sequence is that of Elongation factor Ts from Chlorobium chlorochromatii (strain CaD3).